A 111-amino-acid polypeptide reads, in one-letter code: Auxin-repressed 12.5 kDa protein (111 aa).

The disordered stretch occupies residues 18-111 (ERGLGMLRKV…SGETRSKHHR (94 aa)). A compositionally biased stretch (low complexity) spans 43–57 (TMPTTPTTPVTPTTP). The span at 74-95 (SNLSSKTMGNQVFDSPQPNSPT) shows a compositional bias: polar residues.

The protein belongs to the DRM1/ARP family.

This chain is Auxin-repressed 12.5 kDa protein, found in Fragaria ananassa (Strawberry).